The primary structure comprises 695 residues: Threonine--tRNA ligase (695 aa).

A TGS domain is found at 1 to 76; the sequence is MPRIPSPPQA…TTTDVVEPVT (76 aa). Residues 279 to 585 are catalytic; sequence DHRKLGVELD…LLEHHAGAFP (307 aa). Residues C384, H435, and H562 each coordinate Zn(2+).

The protein belongs to the class-II aminoacyl-tRNA synthetase family. In terms of assembly, homodimer. The cofactor is Zn(2+).

Its subcellular location is the cytoplasm. The enzyme catalyses tRNA(Thr) + L-threonine + ATP = L-threonyl-tRNA(Thr) + AMP + diphosphate + H(+). Its function is as follows. Catalyzes the attachment of threonine to tRNA(Thr) in a two-step reaction: L-threonine is first activated by ATP to form Thr-AMP and then transferred to the acceptor end of tRNA(Thr). Also edits incorrectly charged L-seryl-tRNA(Thr). In Leifsonia xyli subsp. xyli (strain CTCB07), this protein is Threonine--tRNA ligase.